A 921-amino-acid polypeptide reads, in one-letter code: Translation initiation factor IF-2 (921 aa).

Disordered stretches follow at residues 81 to 118, 175 to 194, and 219 to 301; these read AVAE…AAAP, PVVE…ANQA, and VAPA…KKHE. Residues 96-112 are compositionally biased toward pro residues; it reads PAAPTPPEVPAAAPAPP. Over residues 229–241 the composition is skewed to low complexity; that stretch reads RPSPAAGAPSRGA. The span at 292–301 shows a compositional bias: basic and acidic residues; it reads KKKEQPKKHE. In terms of domain architecture, tr-type G spans 421–590; sequence KRPPVVTIMG…LLQADLMELK (170 aa). Residues 430-437 form a G1 region; that stretch reads GHVDHGKT. Position 430–437 (430–437) interacts with GTP; that stretch reads GHVDHGKT. Residues 455–459 form a G2 region; the sequence is GITQH. The interval 476-479 is G3; the sequence is DTPG. Residues 476–480 and 530–533 contribute to the GTP site; these read DTPGH and NKID. A G4 region spans residues 530–533; that stretch reads NKID. The tract at residues 566 to 568 is G5; sequence SAK.

It belongs to the TRAFAC class translation factor GTPase superfamily. Classic translation factor GTPase family. IF-2 subfamily.

Its subcellular location is the cytoplasm. Its function is as follows. One of the essential components for the initiation of protein synthesis. Protects formylmethionyl-tRNA from spontaneous hydrolysis and promotes its binding to the 30S ribosomal subunits. Also involved in the hydrolysis of GTP during the formation of the 70S ribosomal complex. In Pelobacter propionicus (strain DSM 2379 / NBRC 103807 / OttBd1), this protein is Translation initiation factor IF-2.